The primary structure comprises 912 residues: Protein translocase subunit SecA (912 aa).

ATP contacts are provided by residues Gln-87, 105–109 (GEGKT), and Asp-508. A disordered region spans residues 869 to 912 (EQMQGGNAPVPVSQVTRDEPKVGRNDPCPCGSGKKYKHCHGQLS). Zn(2+) is bound by residues Cys-896, Cys-898, Cys-907, and His-908. Residues 902–912 (KKYKHCHGQLS) are compositionally biased toward basic residues.

Belongs to the SecA family. As to quaternary structure, monomer and homodimer. Part of the essential Sec protein translocation apparatus which comprises SecA, SecYEG and auxiliary proteins SecDF-YajC and YidC. The cofactor is Zn(2+).

Its subcellular location is the cell inner membrane. The protein resides in the cytoplasm. It catalyses the reaction ATP + H2O + cellular proteinSide 1 = ADP + phosphate + cellular proteinSide 2.. Functionally, part of the Sec protein translocase complex. Interacts with the SecYEG preprotein conducting channel. Has a central role in coupling the hydrolysis of ATP to the transfer of proteins into and across the cell membrane, serving both as a receptor for the preprotein-SecB complex and as an ATP-driven molecular motor driving the stepwise translocation of polypeptide chains across the membrane. This chain is Protein translocase subunit SecA, found in Xanthomonas axonopodis pv. citri (strain 306).